The primary structure comprises 81 residues: Metallocarboxypeptidase inhibitor (81 aa).

The first 15 residues, 1–15 (MFLLVFLCCLHLVIS), serve as a signal peptide directing secretion. Intrachain disulfides connect Cys-25–Cys-48, Cys-32–Cys-76, Cys-33–Cys-57, and Cys-36–Cys-72.

Its function is as follows. Tightly binding, competitive inhibitor of different types of pancreatic-like carboxypeptidases. Inhibits human CPA4. The chain is Metallocarboxypeptidase inhibitor from Hirudo medicinalis (Medicinal leech).